A 607-amino-acid chain; its full sequence is MCGIIGILGKRCVTSSLVESLKRLEYRGYDSSGIATVHNGRLYRIRAEGKLVHLEEKLQKTPLKGNLGIGHTRWATHGVAVERNAHPHVTERLAIVHNGIIENFVELQKELIEDGYTFETETDTEVIAHLITRALKSGLSPQEAIRTSWKRLQGAFAIVVIFEGEDNLMIAARSGPPLAIGYGKDEFFVGSDAIALAPFVDSISYMEDGDWAVLTREDITIYDVDNQPVKRPLTPLFEGALLASKGNHRHFMHKEMFEQPEVISHNLAHYLDLGNYTVRSFQKLIDWKKINRILFASCGTAYYSTLVARYWFESFAALSVDNDVASEFRYREPPINSDVLSVFVSQSGETADTLASLRYCREYGVKTATIVNVEQSTMAREADFVLPTRAGPEIGVASTKAFTCQLATLAAMALDAAKQRGFLAEQAEHQFVQQLAEVPRILNEVLKLDNKIEQICRNLVNVKGVLYLGRGTSYPIALEGALKLKELSYIHAEGYAAGELKHGPIALVDEAIPVIVVAPYDRWFEKTCSNMQEVAARNGRIILITDKKGAEAVHLDILSTIVLPNIPEFIAPIIYALPIQLIAYHTAVLLGTDVDQPRNLAKSVTVE.

Cysteine 2 (nucleophile; for GATase activity) is an active-site residue. Residues 2 to 217 form the Glutamine amidotransferase type-2 domain; sequence CGIIGILGKR…DGDWAVLTRE (216 aa). SIS domains lie at 277 to 422 and 455 to 597; these read TVRS…QRGF and ICRN…VDQP. Residue lysine 602 is the For Fru-6P isomerization activity of the active site.

As to quaternary structure, homodimer.

The protein resides in the cytoplasm. It carries out the reaction D-fructose 6-phosphate + L-glutamine = D-glucosamine 6-phosphate + L-glutamate. In terms of biological role, catalyzes the first step in hexosamine metabolism, converting fructose-6P into glucosamine-6P using glutamine as a nitrogen source. The sequence is that of Glutamine--fructose-6-phosphate aminotransferase [isomerizing] from Bartonella henselae (strain ATCC 49882 / DSM 28221 / CCUG 30454 / Houston 1) (Rochalimaea henselae).